A 139-amino-acid polypeptide reads, in one-letter code: Small ribosomal subunit protein uS9 (139 aa).

Belongs to the universal ribosomal protein uS9 family.

The chain is Small ribosomal subunit protein uS9 from Coxiella burnetii (strain CbuK_Q154) (Coxiella burnetii (strain Q154)).